We begin with the raw amino-acid sequence, 75 residues long: RNA-binding protein KhpA (75 aa).

The KH domain occupies 29-75 (SIILELKVSPEDMGKVIGKQGRIAKAIRTVVKAAAIKENKKVVVEII).

Belongs to the KhpA RNA-binding protein family. In terms of assembly, forms a complex with KhpB.

The protein localises to the cytoplasm. A probable RNA chaperone. Forms a complex with KhpB which binds to cellular RNA and controls its expression. Plays a role in peptidoglycan (PG) homeostasis and cell length regulation. The chain is RNA-binding protein KhpA from Clostridium perfringens (strain 13 / Type A).